The following is a 356-amino-acid chain: Fructose-1,6-bisphosphatase class 1 (356 aa).

Mg(2+)-binding residues include Glu-91, Asp-113, Leu-115, and Asp-116. Substrate is bound by residues 116–119 (DGSS) and Asn-208. Position 280 (Glu-280) interacts with Mg(2+).

This sequence belongs to the FBPase class 1 family. As to quaternary structure, homotetramer. It depends on Mg(2+) as a cofactor.

Its subcellular location is the cytoplasm. It catalyses the reaction beta-D-fructose 1,6-bisphosphate + H2O = beta-D-fructose 6-phosphate + phosphate. It functions in the pathway carbohydrate biosynthesis; gluconeogenesis. In Methylacidiphilum infernorum (isolate V4) (Methylokorus infernorum (strain V4)), this protein is Fructose-1,6-bisphosphatase class 1.